A 338-amino-acid polypeptide reads, in one-letter code: Protein-glutamate methylesterase/protein-glutamine glutaminase 2 (338 aa).

Residues Arg-2 to Leu-119 form the Response regulatory domain. Residue Asp-53 is modified to 4-aspartylphosphate. The CheB-type methylesterase domain maps to Pro-145–Val-330. Catalysis depends on residues Ser-158, His-185, and Asp-278.

It belongs to the CheB family. Phosphorylated by CheA. Phosphorylation of the N-terminal regulatory domain activates the methylesterase activity.

Its subcellular location is the cytoplasm. It carries out the reaction [protein]-L-glutamate 5-O-methyl ester + H2O = L-glutamyl-[protein] + methanol + H(+). The enzyme catalyses L-glutaminyl-[protein] + H2O = L-glutamyl-[protein] + NH4(+). Functionally, involved in chemotaxis. Part of a chemotaxis signal transduction system that modulates chemotaxis in response to various stimuli. Catalyzes the demethylation of specific methylglutamate residues introduced into the chemoreceptors (methyl-accepting chemotaxis proteins or MCP) by CheR. Also mediates the irreversible deamidation of specific glutamine residues to glutamic acid. The protein is Protein-glutamate methylesterase/protein-glutamine glutaminase 2 of Cupriavidus metallidurans (strain ATCC 43123 / DSM 2839 / NBRC 102507 / CH34) (Ralstonia metallidurans).